Consider the following 110-residue polypeptide: Small ribosomal subunit protein bS18c (110 aa).

Belongs to the bacterial ribosomal protein bS18 family. Part of the 30S ribosomal subunit.

The protein localises to the plastid. It is found in the chloroplast. In Pisum sativum (Garden pea), this protein is Small ribosomal subunit protein bS18c (rps18).